We begin with the raw amino-acid sequence, 430 residues long: POU domain, class 2, transcription factor 3 (430 aa).

Disordered regions lie at residues 1–40 (MVNLEPMHTEIKMSGDVADSTDARSTFGQVESGNDRNGLD), 60–81 (HRPCHLSQGPTMMPGNQMSGDM), 129–180 (LLLP…EPTD), and 248–267 (DAESSPSDPSASTPSSYPTL). 2 stretches are compositionally biased toward polar residues: residues 23 to 32 (ARSTFGQVES) and 67 to 78 (QGPTMMPGNQMS). Positions 129–139 (LLLPQTGPGLT) are enriched in low complexity. One can recognise a POU-specific domain in the interval 176–250 (DEPTDLEELE…LLEKWLNDAE (75 aa)). The span at 251-267 (SSPSDPSASTPSSYPTL) shows a compositional bias: low complexity. A DNA-binding region (homeobox) is located at residues 274 to 333 (KRKKRTSIETNIRLTLEKRFQDNPKPSSEEISMIAEQLSMEKEVVRVWFCNRRQKEKRIN). Low complexity-rich tracts occupy residues 355–364 (SLGSLSVPPV) and 374–390 (SSCSPGNNSRPSSPGSG). The segment at 355-413 (SLGSLSVPPVHSTMPGTVTSSCSPGNNSRPSSPGSGLHASSPTASQNNSKAAMNPSSAA) is disordered. The segment covering 392 to 413 (HASSPTASQNNSKAAMNPSSAA) has biased composition (polar residues).

Belongs to the POU transcription factor family. Class-2 subfamily. As to quaternary structure, interacts (via the POU domain) with POU2AF1 and POU2AF2 in a DNA-dependent manner; this interaction recruits POU2AF2 to chromatin and increases POU2F3 transactivation activity. In terms of tissue distribution, expressed in epidermis and hair follicles.

It is found in the nucleus. Transcription factor that binds to the octamer motif (5'-ATTTGCAT-3') and regulates cell type-specific differentiation pathways. Involved in the regulation of keratinocytes differentiation. The POU2F3-POU2AF2/POU2AF3 complex drives the expression of tuft-cell-specific genes, a rare chemosensory cells that coordinate immune and neural functions within mucosal epithelial tissues. Its function is as follows. Inhibits transactivation by POU2F1. In Rattus norvegicus (Rat), this protein is POU domain, class 2, transcription factor 3 (Pou2f3).